The sequence spans 188 residues: Elongation factor P (188 aa).

This sequence belongs to the elongation factor P family.

It is found in the cytoplasm. It functions in the pathway protein biosynthesis; polypeptide chain elongation. In terms of biological role, involved in peptide bond synthesis. Stimulates efficient translation and peptide-bond synthesis on native or reconstituted 70S ribosomes in vitro. Probably functions indirectly by altering the affinity of the ribosome for aminoacyl-tRNA, thus increasing their reactivity as acceptors for peptidyl transferase. This Aeromonas hydrophila subsp. hydrophila (strain ATCC 7966 / DSM 30187 / BCRC 13018 / CCUG 14551 / JCM 1027 / KCTC 2358 / NCIMB 9240 / NCTC 8049) protein is Elongation factor P.